The primary structure comprises 1192 residues: Homeodomain-interacting protein kinase 3 (1192 aa).

Residue Lys-27 forms a Glycyl lysine isopeptide (Lys-Gly) (interchain with G-Cter in SUMO); alternate linkage. Lys-27 participates in a covalent cross-link: Glycyl lysine isopeptide (Lys-Gly) (interchain with G-Cter in SUMO2); alternate. The Protein kinase domain maps to 197–525 (YEVLDFLGRG…PIETLNHPFV (329 aa)). ATP is bound by residues 203–211 (LGRGTFGQV) and Lys-226. Catalysis depends on Asp-322, which acts as the Proton acceptor. Tyr-359 is subject to Phosphotyrosine. The interaction with AR stretch occupies residues 767-921 (QNRSNSLQNT…NSMSDDEQES (155 aa)). An interaction with FAS region spans residues 775–868 (NTNIPHSAFI…SPRPSLRECK (94 aa)). Positions 799-829 (CVDTQDNHTSEGEAGTCREASVRQDSSVSDK) are disordered. Residues 832–988 (QTIIIADSPS…ESGLSVDEHM (157 aa)) are required for localization to nuclear speckles. The tract at residues 843–895 (AVSVITISSDSDDEETSPRPSLRECKGSLDCEACQSTLNIDRMCSLSSPDSTL) is SUMO interaction motifs (SIM); required for nuclear localization and kinase activity. The segment at 847–857 (ITISSDSDDEE) is interaction with UBL1. Over residues 889 to 906 (SSPDSTLSTSSSGQSSPS) the composition is skewed to low complexity. 2 disordered regions span residues 889–943 (SSPD…PFAE) and 956–1023 (LGTC…KPAA). Lys-1185 is covalently cross-linked (Glycyl lysine isopeptide (Lys-Gly) (interchain with G-Cter in SUMO)).

Belongs to the protein kinase superfamily. CMGC Ser/Thr protein kinase family. HIPK subfamily. In terms of assembly, interacts with UBL1/SUMO-1. Interacts with and stabilizes ligand-bound androgen receptor (AR). Interacts with Nkx1-2. Interacts with FAS and DAXX. Probably part of a complex consisting of HIPK3, FAS and FADD. Binds to NR5A1/SF1, SPEN/MINT and RUNX2. Post-translationally, autophosphorylated, but autophosphorylation is not required for catalytic activity. In terms of processing, may be sumoylated. In terms of tissue distribution, heart, skeletal muscle, spleen, testis and lung.

The protein resides in the cytoplasm. It localises to the nucleus. The enzyme catalyses L-seryl-[protein] + ATP = O-phospho-L-seryl-[protein] + ADP + H(+). It catalyses the reaction L-threonyl-[protein] + ATP = O-phospho-L-threonyl-[protein] + ADP + H(+). Functionally, serine/threonine-protein kinase involved in transcription regulation, apoptosis and steroidogenic gene expression. Phosphorylates JUN and RUNX2. Seems to negatively regulate apoptosis by promoting FADD phosphorylation. Enhances androgen receptor-mediated transcription. May act as a transcriptional corepressor for NK homeodomain transcription factors. The phosphorylation of NR5A1 activates SF1 leading to increased steroidogenic gene expression upon cAMP signaling pathway stimulation. In osteoblasts, supports transcription activation: phosphorylates RUNX2 that synergizes with SPEN/MINT to enhance FGFR2-mediated activation of the osteocalcin FGF-responsive element (OCFRE). The polypeptide is Homeodomain-interacting protein kinase 3 (Hipk3) (Mus musculus (Mouse)).